The primary structure comprises 27 residues: Protein YkiD (27 aa).

The protein is Protein YkiD of Escherichia coli (strain K12).